Here is a 237-residue protein sequence, read N- to C-terminus: Maternal B9.10 protein (237 aa).

This sequence belongs to the BTG family.

In Xenopus laevis (African clawed frog), this protein is Maternal B9.10 protein.